The primary structure comprises 279 residues: MAATAVTLPSSPAPFPVTTTASSSRNVRLLLRSPPPRRALRVAASAAADAPPKPAPPPTSPSGIVLVDPTEAQKVHRLKAVYDQKVVPLITEEFGYTNVHQVPKVEKIVVNCGLGAEAGNSKGLESAMKDLAMITGQWPVKTKAKKSVASFKIREGNTIGIAVTLRGRVMFNFLDRLINLGLPRTMDFLGVNPNSFDGHGNFTIGLRDQGVFPEIPYEVGGKKNGMDVCIVTTAKTDNEALRLLTLLGMPFAEHIKSSVVIRKKRLKRHHFMSKGRGRR.

Disordered regions lie at residues 1-23 (MAATAVTLPSSPAPFPVTTTASS) and 40-63 (LRVAASAAADAPPKPAPPPTSPSG). The N-terminal 43 residues, 1 to 43 (MAATAVTLPSSPAPFPVTTTASSSRNVRLLLRSPPPRRALRVA), are a transit peptide targeting the chloroplast. Residues 41 to 50 (RVAASAAADA) show a composition bias toward low complexity. Positions 51 to 60 (PPKPAPPPTS) are enriched in pro residues.

Belongs to the universal ribosomal protein uL5 family. As to quaternary structure, part of the 50S ribosomal subunit; contacts the 5S rRNA.

Its subcellular location is the plastid. It localises to the chloroplast. Its function is as follows. Binds 5S rRNA, forms part of the central protuberance of the 50S subunit. The protein is Large ribosomal subunit protein uL5c (RPL5) of Oryza sativa subsp. japonica (Rice).